The sequence spans 667 residues: mRNA cap guanine-N(7) methyltransferase (667 aa).

Positions 1 to 19 are enriched in basic and acidic residues; that stretch reads MYDPARDSWEERDGDEARS. The segment at 1–272 is disordered; the sequence is MYDPARDSWE…RRRQEERERA (272 aa). The span at 33 to 52 shows a compositional bias: polar residues; that stretch reads FSSSEQIYGASGENNNTTDL. Residues 72–87 show a composition bias toward low complexity; that stretch reads SPPAQSTTQTPPSIST. The span at 88-128 shows a compositional bias: polar residues; it reads HVQSPVNPAAQEASNTQSLTSAAQNQSNKSTTTMDNTSGSA. Positions 132–142 are enriched in basic and acidic residues; that stretch reads PRADPSDKSNR. The segment covering 147–156 has biased composition (polar residues); that stretch reads ASPTDQNGSQ. A compositionally biased stretch (basic and acidic residues) spans 256–272; that stretch reads LVDRETLRRRQEERERA. In terms of domain architecture, mRNA cap 0 methyltransferase spans 309–667; the sequence is SKIKGLRSFN…FYHAFCFYKV (359 aa). Position 318-319 (318-319) interacts with mRNA; that stretch reads NN. Residues Lys322, Gly365, Asp389, Asp427, 470-472, and Tyr475 contribute to the S-adenosyl-L-methionine site; that span reads MFT. The span at 521–535 shows a compositional bias: basic and acidic residues; it reads KKERQSQAKKEKTDE. A disordered region spans residues 521–547; it reads KKERQSQAKKEKTDEAPEDGEVEEDDG. A compositionally biased stretch (acidic residues) spans 536–547; that stretch reads APEDGEVEEDDG.

Belongs to the class I-like SAM-binding methyltransferase superfamily. mRNA cap 0 methyltransferase family.

The protein localises to the nucleus. The enzyme catalyses a 5'-end (5'-triphosphoguanosine)-ribonucleoside in mRNA + S-adenosyl-L-methionine = a 5'-end (N(7)-methyl 5'-triphosphoguanosine)-ribonucleoside in mRNA + S-adenosyl-L-homocysteine. In terms of biological role, responsible for methylating the 5'-cap structure of mRNAs. This Neosartorya fischeri (strain ATCC 1020 / DSM 3700 / CBS 544.65 / FGSC A1164 / JCM 1740 / NRRL 181 / WB 181) (Aspergillus fischerianus) protein is mRNA cap guanine-N(7) methyltransferase (abd1).